We begin with the raw amino-acid sequence, 634 residues long: Beta-ketoacyl-[acyl-carrier-protein] synthase FabY (634 aa).

Residues 78–546 enclose the Ketosynthase family 3 (KS3) domain; it reads ERIFASTLVR…GNNASGVVLS (469 aa). Active-site for beta-ketoacyl synthase activity residues include Cys-281, His-434, and His-472.

Belongs to the thiolase-like superfamily. Beta-ketoacyl-ACP synthases family. Homodimer.

It catalyses the reaction malonyl-[ACP] + acetyl-CoA + H(+) = 3-oxobutanoyl-[ACP] + CO2 + CoA. The protein operates within lipid metabolism; fatty acid biosynthesis. Its function is as follows. Involved in the initiation of the fatty acid biosynthesis. Catalyzes the condensation of acetyl coenzyme A (acetyl-CoA) with malonyl-acyl carrier protein (ACP) to make the fatty acid synthesis (FAS) primer beta-acetoacetyl-ACP. It can also use short-chain acyl-CoA as substrates, including butyryl-CoA, and hexanoyl-CoA, but does not use any of the longer chain acyl-CoA substrates. The polypeptide is Beta-ketoacyl-[acyl-carrier-protein] synthase FabY (fabY) (Pseudomonas aeruginosa (strain ATCC 15692 / DSM 22644 / CIP 104116 / JCM 14847 / LMG 12228 / 1C / PRS 101 / PAO1)).